Consider the following 324-residue polypeptide: Probable acrylyl-CoA reductase AcuI (324 aa).

NADP(+) contacts are provided by residues Y41, 156–159 (SGGV), 178–180 (SGR), R198, L242, I256, S267, and N313.

This sequence belongs to the zinc-containing alcohol dehydrogenase family. Acrylyl-CoA reductase subfamily. In terms of assembly, homodimer.

It is found in the cytoplasm. It carries out the reaction propanoyl-CoA + NADP(+) = acryloyl-CoA + NADPH + H(+). Probably catalyzes the NADPH-dependent reduction of acrylyl-CoA to propanoyl-CoA. The sequence is that of Probable acrylyl-CoA reductase AcuI (acuI) from Escherichia coli (strain K12).